The sequence spans 1083 residues: MPKRTDIRKVLVIGSGPIVIGQAVEFDYSGTQAIKALRDEGVEVVLLNSNPATVMTDPEFAHRTYIEPITVEAAERILASERPDSLLPTMGGQTALNLAKALAEQGILEKYGVRLIGASLDAINKAEDRQLFKAAMQKIGVALPKSGYATTLDQAMSLVEDIGFPAIIRPSFTLGGTGGGIAYNREEFETICRSGLKASPTTTILVEESVLGWKEYELEVVRDTADNVIIVCSIENLDPMGVHTGDSITVAPAQTLTDREYQRMRQASLAIIREIGVETGGSNIQFGINPKDGRMVVIEMNPRVSRSSALASKATGYPIAKIAAKLALGYTLDELRNDITRDTPASFEPTLDYVVVKVPRFNFEKFPHADRTLTTSMRSVGEVMAIGRTFPEAYMKALRSMELGRVGLESPELPAEKEEREKVLREALRIPRPERPWFVAQAFREGMTVEDVHALSAIDPWFLRYIQMLVNEAQSLQEYGRLDQLPDEVLRQAKAHGFSDKYLGRLLGYPAEEVRAHRHARNIRPVYKRVDTCAAEFEAYTPYLYSTYEEEDEAPPTDRQKVLILGSGPIRIGQGIEFDYACVHAAFALREAGYETVMVNCNPETVSTDYDTSDRLYFEPLTIEDVLEVSQREKPVGAIVQFGGQTPLRISVPLEKAGLPILGTSPDAIDRAEDRERFAALIEKLGLKQPENGVARSHAEAFKVAERIGYPVMVRPSYVLGGRAMETVYDVASLERYMREAVSASPEHPVLIDRFLKEAIEVDLDLVADRTGAVMIGGVLEHIQEAGVHSGDAAATLPPHSLSPDLVERMKDQAIALARELGVVGLMNVQFAIQGKTIYILEVNPRASRTVPFISKATGVAMAKIAALCMVGKTLKELGVTQEPEFKHVAVKESVFPFARFAGVDVILGPEMKSTGEVMGLANDYASAFAKSQLAAGVKLPKSGKVFISVKDDDKPAVVDLARRLRSMGFSLVVTSGTHTYLATKGIEAQVVQKVTEGRPNIVDKIVDGEIVLVINTTFGKQEIADSFSIRRESLMHSVPYYTTVQAARMAVGALESLKCTELEVKPLQEYLGINAAPPGTRR.

Residues 1–402 (MPKRTDIRKV…AYMKALRSME (402 aa)) are carboxyphosphate synthetic domain. R129, R169, G175, G176, E208, V210, E215, G241, V242, H243, Q285, and E299 together coordinate ATP. The ATP-grasp 1 domain maps to 133-328 (KAAMQKIGVA…IAKIAAKLAL (196 aa)). Positions 285, 299, and 301 each coordinate Mg(2+). Residues Q285, E299, and N301 each coordinate Mn(2+). An oligomerization domain region spans residues 403 to 554 (LGRVGLESPE…YSTYEEEDEA (152 aa)). The carbamoyl phosphate synthetic domain stretch occupies residues 555–937 (PPTDRQKVLI…AFAKSQLAAG (383 aa)). The 193-residue stretch at 679–871 (AALIEKLGLK…MAKIAALCMV (193 aa)) folds into the ATP-grasp 2 domain. Residues R715, R754, L756, E761, G787, V788, H789, S790, Q830, and E842 each contribute to the ATP site. Positions 830, 842, and 844 each coordinate Mg(2+). Residues Q830, E842, and N844 each contribute to the Mn(2+) site. Residues 938 to 1078 (VKLPKSGKVF…QEYLGINAAP (141 aa)) form the MGS-like domain. Positions 938-1083 (VKLPKSGKVF…INAAPPGTRR (146 aa)) are allosteric domain.

It belongs to the CarB family. In terms of assembly, composed of two chains; the small (or glutamine) chain promotes the hydrolysis of glutamine to ammonia, which is used by the large (or ammonia) chain to synthesize carbamoyl phosphate. Tetramer of heterodimers (alpha,beta)4. Mg(2+) is required as a cofactor. The cofactor is Mn(2+).

It catalyses the reaction hydrogencarbonate + L-glutamine + 2 ATP + H2O = carbamoyl phosphate + L-glutamate + 2 ADP + phosphate + 2 H(+). The catalysed reaction is hydrogencarbonate + NH4(+) + 2 ATP = carbamoyl phosphate + 2 ADP + phosphate + 2 H(+). It participates in amino-acid biosynthesis; L-arginine biosynthesis; carbamoyl phosphate from bicarbonate: step 1/1. Its pathway is pyrimidine metabolism; UMP biosynthesis via de novo pathway; (S)-dihydroorotate from bicarbonate: step 1/3. In terms of biological role, large subunit of the glutamine-dependent carbamoyl phosphate synthetase (CPSase). CPSase catalyzes the formation of carbamoyl phosphate from the ammonia moiety of glutamine, carbonate, and phosphate donated by ATP, constituting the first step of 2 biosynthetic pathways, one leading to arginine and/or urea and the other to pyrimidine nucleotides. The large subunit (synthetase) binds the substrates ammonia (free or transferred from glutamine from the small subunit), hydrogencarbonate and ATP and carries out an ATP-coupled ligase reaction, activating hydrogencarbonate by forming carboxy phosphate which reacts with ammonia to form carbamoyl phosphate. In Myxococcus xanthus (strain DK1622), this protein is Carbamoyl phosphate synthase large chain.